Reading from the N-terminus, the 204-residue chain is Protein Nef (204 aa).

The disordered stretch occupies residues 1-33 (MGGKWSKRRAEGWQTIRERMRRAEPAEPAADGV). Gly2 is lipidated: N-myristoyl glycine; by host. At Ser6 the chain carries Phosphoserine; by host. Residues 8-25 (RRAEGWQTIRERMRRAEP) are compositionally biased toward basic and acidic residues. The interval 63–66 (EEGE) is acidic; interacts with host PACS1 and PACS2; stabilizes the interaction of NEF/MHC-I with host AP1M1; necessary for MHC-I internalization. The segment at 70–79 (PVRPQVPLRP) is SH3-binding; interaction with Src family tyrosine kinases. A PxxP; stabilizes the interaction of NEF/MHC-I with host AP1M1; necessary for MHC-I internalization motif is present at residues 73 to 76 (PQVP). Positions 109-125 (DILDLWVYHTQGFFPDW) are mediates dimerization, Nef-PTE1 interaction. The binding to ATP6V1H stretch occupies residues 149–179 (VEPDEGENNREDNSLLHPANQHGVEDSERQV). The Dileucine internalization motif; necessary for CD4 internalization motif lies at 163–164 (LL). A Diacidic; necessary for CD4 internalization motif is present at residues 173 to 174 (ED).

This sequence belongs to the lentivirus primate group Nef protein family. Monomer; cytosolic form. Homodimer; membrane bound form. Interacts with Nef associated p21-activated kinase (PAK2); this interaction activates PAK2. Associates with the Nef-MHC-I-AP1 complex; this complex is required for MHC-I internalization. Interacts (via C-terminus) with host PI3-kinase. Interacts with host PACS1; this interaction seems to be weak. Interacts with host PACS2. Interacts with host LCK and MAPK3; these interactions inhibit the kinase activity of the latter. Interacts with host ATP6V1H; this interaction may play a role in CD4 endocytosis. Associates with the CD4-Nef-AP2 complex; this complex is required for CD4 internalization. Interacts with host AP2 subunit alpha and AP2 subunit sigma2. Interacts with TCR-zeta chain; this interaction up-regulates the Fas ligand (FasL) surface expression. Interacts with host HCK, LYN, and SRC; these interactions activate the Src family kinases. Interacts with MAP3K5; this interaction inhibits the Fas and TNFR-mediated death signals. Interacts with beta-COP and PTE1. Interacts with human RACK1; this increases Nef phosphorylation by PKC. Interacts with TP53; this interaction decreases the half-life of TP53, protecting the infected cell against p53-mediated apoptosis. Post-translationally, the virion-associated Nef proteins are cleaved by the viral protease to release the soluble C-terminal core protein. Nef is probably cleaved concomitantly with viral structural proteins on maturation of virus particles. In terms of processing, myristoylated. Phosphorylated on serine residues, probably by host PKCdelta and theta.

The protein localises to the host cell membrane. Its subcellular location is the virion. It is found in the secreted. It localises to the host Golgi apparatus membrane. In terms of biological role, factor of infectivity and pathogenicity, required for optimal virus replication. Alters numerous pathways of T-lymphocyte function and down-regulates immunity surface molecules in order to evade host defense and increase viral infectivity. Alters the functionality of other immunity cells, like dendritic cells, monocytes/macrophages and NK cells. In infected CD4(+) T-lymphocytes, down-regulates the surface MHC-I, mature MHC-II, CD4, CD28, CCR5 and CXCR4 molecules. Mediates internalization and degradation of host CD4 through the interaction of with the cytoplasmic tail of CD4, the recruitment of AP-2 (clathrin adapter protein complex 2), internalization through clathrin coated pits, and subsequent transport to endosomes and lysosomes for degradation. Diverts host MHC-I molecules to the trans-Golgi network-associated endosomal compartments by an endocytic pathway to finally target them for degradation. MHC-I down-regulation may involve AP-1 (clathrin adapter protein complex 1) or possibly Src family kinase-ZAP70/Syk-PI3K cascade recruited by PACS2. In consequence infected cells are masked for immune recognition by cytotoxic T-lymphocytes. Decreasing the number of immune receptors also prevents reinfection by more HIV particles (superinfection). Down-regulates host SERINC3 and SERINC5 thereby excluding these proteins from the viral particles. Virion infectivity is drastically higher when SERINC3 or SERINC5 are excluded from the viral envelope, because these host antiviral proteins impair the membrane fusion event necessary for subsequent virion penetration. Its function is as follows. Bypasses host T-cell signaling by inducing a transcriptional program nearly identical to that of anti-CD3 cell activation. Interaction with TCR-zeta chain up-regulates the Fas ligand (FasL). Increasing surface FasL molecules and decreasing surface MHC-I molecules on infected CD4(+) cells send attacking cytotoxic CD8+ T-lymphocytes into apoptosis. Functionally, plays a role in optimizing the host cell environment for viral replication without causing cell death by apoptosis. Protects the infected cells from apoptosis in order to keep them alive until the next virus generation is ready to strike. Inhibits the Fas and TNFR-mediated death signals by blocking MAP3K5/ASK1. Decreases the half-life of TP53, protecting the infected cell against p53-mediated apoptosis. Inhibits the apoptotic signals regulated by the Bcl-2 family proteins through the formation of a Nef/PI3-kinase/PAK2 complex that leads to activation of PAK2 and induces phosphorylation of host BAD. In terms of biological role, extracellular Nef protein targets CD4(+) T-lymphocytes for apoptosis by interacting with CXCR4 surface receptors. This is Protein Nef from Human immunodeficiency virus type 1 group M subtype B (strain 89.6) (HIV-1).